The sequence spans 217 residues: Thiamine-phosphate synthase (217 aa).

4-amino-2-methyl-5-(diphosphooxymethyl)pyrimidine contacts are provided by residues 39-43 (QLRRK) and Asn-71. Residues Asp-72 and Asp-91 each contribute to the Mg(2+) site. Ser-110 provides a ligand contact to 4-amino-2-methyl-5-(diphosphooxymethyl)pyrimidine. Residue 137–139 (SPT) coordinates 2-[(2R,5Z)-2-carboxy-4-methylthiazol-5(2H)-ylidene]ethyl phosphate. Residue Lys-140 coordinates 4-amino-2-methyl-5-(diphosphooxymethyl)pyrimidine. Residues Gly-173 and 193 to 194 (IS) each bind 2-[(2R,5Z)-2-carboxy-4-methylthiazol-5(2H)-ylidene]ethyl phosphate.

This sequence belongs to the thiamine-phosphate synthase family. The cofactor is Mg(2+).

It carries out the reaction 2-[(2R,5Z)-2-carboxy-4-methylthiazol-5(2H)-ylidene]ethyl phosphate + 4-amino-2-methyl-5-(diphosphooxymethyl)pyrimidine + 2 H(+) = thiamine phosphate + CO2 + diphosphate. The catalysed reaction is 2-(2-carboxy-4-methylthiazol-5-yl)ethyl phosphate + 4-amino-2-methyl-5-(diphosphooxymethyl)pyrimidine + 2 H(+) = thiamine phosphate + CO2 + diphosphate. It catalyses the reaction 4-methyl-5-(2-phosphooxyethyl)-thiazole + 4-amino-2-methyl-5-(diphosphooxymethyl)pyrimidine + H(+) = thiamine phosphate + diphosphate. It participates in cofactor biosynthesis; thiamine diphosphate biosynthesis; thiamine phosphate from 4-amino-2-methyl-5-diphosphomethylpyrimidine and 4-methyl-5-(2-phosphoethyl)-thiazole: step 1/1. Functionally, condenses 4-methyl-5-(beta-hydroxyethyl)thiazole monophosphate (THZ-P) and 2-methyl-4-amino-5-hydroxymethyl pyrimidine pyrophosphate (HMP-PP) to form thiamine monophosphate (TMP). The protein is Thiamine-phosphate synthase of Bordetella bronchiseptica (strain ATCC BAA-588 / NCTC 13252 / RB50) (Alcaligenes bronchisepticus).